Consider the following 87-residue polypeptide: MANTPSAKKAVRKIERRTAINKSRRSQMRTYIRKVEEAIASGDAAAATSALQSAAPLVMRAAQKGIVHKNTASRKVSRLSKRVKALA.

Belongs to the bacterial ribosomal protein bS20 family.

Functionally, binds directly to 16S ribosomal RNA. In Beijerinckia indica subsp. indica (strain ATCC 9039 / DSM 1715 / NCIMB 8712), this protein is Small ribosomal subunit protein bS20.